The following is a 197-amino-acid chain: Probable chorismate pyruvate-lyase (197 aa).

3 residues coordinate substrate: R66, L104, and E169.

Belongs to the UbiC family.

It is found in the cytoplasm. It carries out the reaction chorismate = 4-hydroxybenzoate + pyruvate. It participates in cofactor biosynthesis; ubiquinone biosynthesis. Functionally, removes the pyruvyl group from chorismate, with concomitant aromatization of the ring, to provide 4-hydroxybenzoate (4HB) for the ubiquinone pathway. In Albidiferax ferrireducens (strain ATCC BAA-621 / DSM 15236 / T118) (Rhodoferax ferrireducens), this protein is Probable chorismate pyruvate-lyase.